We begin with the raw amino-acid sequence, 85 residues long: Coiled-coil-helix-coiled-coil-helix domain-containing protein 7 (85 aa).

The CHCH domain maps to 13 to 55; the sequence is INPCLSESDASTRCLDENNYDRERCSTYFLRYKNCRRFWNSIV. 2 short sequence motifs (cx9C motif) span residues 16–26 and 37–47; these read CLSESDASTRC and CSTYFLRYKNC. 2 disulfide bridges follow: cysteine 16–cysteine 47 and cysteine 26–cysteine 37.

The protein belongs to the CHCHD7 family. As to quaternary structure, monomer.

The protein localises to the mitochondrion intermembrane space. The chain is Coiled-coil-helix-coiled-coil-helix domain-containing protein 7 (CHCHD7) from Homo sapiens (Human).